Consider the following 430-residue polypeptide: MGFQDQRSKEAFARANGVLPGGVNSPVRAFKSVGREPIFIAKGQGARLWDIDGNSYLDYVLSWGPLILGHAHPVVVGAIKAAAERGTSYGAPTEIETECAEEVIKAFPSMEMVRMVSSGTEATMSALRLARGVTGRNKIIKFEGCYHGHGDSLLIKAGSGALTFGVPTSPGVPSSVASQTIVAQYNDLEGLKEIFKECGEDIAAVILEPVTGNMGVVLPQPGFLAGLRTLTQDYGSLLIFDEVMTGFRVSYGGAQGRYQIDPDLTCLGKVIGGGLPVAAYGGKRKYMEQVAPSGPIYQAGTLSGNPLAMAAGLATLKLLQQEGVYEGLEKKTTRLAEGLQSIAQELGFPIWVNSVGAMFSAFFTDQPVIDFKSACSSDVERFGSFFRGMLERGIYLAPSQYEAVFLSAAHTDADIDYTLEQARDVLKSLG.

The residue at position 269 (Lys-269) is an N6-(pyridoxal phosphate)lysine.

It belongs to the class-III pyridoxal-phosphate-dependent aminotransferase family. HemL subfamily. Homodimer. The cofactor is pyridoxal 5'-phosphate.

The protein resides in the cytoplasm. The catalysed reaction is (S)-4-amino-5-oxopentanoate = 5-aminolevulinate. The protein operates within porphyrin-containing compound metabolism; protoporphyrin-IX biosynthesis; 5-aminolevulinate from L-glutamyl-tRNA(Glu): step 2/2. The chain is Glutamate-1-semialdehyde 2,1-aminomutase from Desulfitobacterium hafniense (strain Y51).